Here is a 584-residue protein sequence, read N- to C-terminus: Arginine--tRNA ligase (584 aa).

The 'HIGH' region motif lies at 127–137 (PNLAKEMHVGH).

The protein belongs to the class-I aminoacyl-tRNA synthetase family. In terms of assembly, monomer.

It is found in the cytoplasm. The enzyme catalyses tRNA(Arg) + L-arginine + ATP = L-arginyl-tRNA(Arg) + AMP + diphosphate. The polypeptide is Arginine--tRNA ligase (Alcanivorax borkumensis (strain ATCC 700651 / DSM 11573 / NCIMB 13689 / SK2)).